Here is a 157-residue protein sequence, read N- to C-terminus: 3-hydroxyacyl-[acyl-carrier-protein] dehydratase FabZ (157 aa).

His58 is a catalytic residue.

It belongs to the thioester dehydratase family. FabZ subfamily.

The protein localises to the cytoplasm. It catalyses the reaction a (3R)-hydroxyacyl-[ACP] = a (2E)-enoyl-[ACP] + H2O. Involved in unsaturated fatty acids biosynthesis. Catalyzes the dehydration of short chain beta-hydroxyacyl-ACPs and long chain saturated and unsaturated beta-hydroxyacyl-ACPs. This chain is 3-hydroxyacyl-[acyl-carrier-protein] dehydratase FabZ, found in Rhizorhabdus wittichii (strain DSM 6014 / CCUG 31198 / JCM 15750 / NBRC 105917 / EY 4224 / RW1) (Sphingomonas wittichii).